Here is a 349-residue protein sequence, read N- to C-terminus: Ferredoxin--NADP reductase 1 (349 aa).

7 residues coordinate FAD: E36, K44, Y48, I88, L123, D290, and S331.

It belongs to the ferredoxin--NADP reductase type 2 family. In terms of assembly, homodimer. It depends on FAD as a cofactor.

It catalyses the reaction 2 reduced [2Fe-2S]-[ferredoxin] + NADP(+) + H(+) = 2 oxidized [2Fe-2S]-[ferredoxin] + NADPH. In Bacillus mycoides (strain KBAB4) (Bacillus weihenstephanensis), this protein is Ferredoxin--NADP reductase 1.